We begin with the raw amino-acid sequence, 126 residues long: Probable flagellum biosynthesis repressor protein FlbT (126 aa).

Belongs to the FlbT family.

Has a post-transcriptional repressor function in flagellum biogenesis. Associates with the 5'-UTR of fljK mRNA and promotes its degradation. The sequence is that of Probable flagellum biosynthesis repressor protein FlbT from Rhodopseudomonas palustris (strain ATCC BAA-98 / CGA009).